Consider the following 387-residue polypeptide: Acyl-CoA dehydrogenase FadE29 (387 aa).

Residues 123-126 (IGYT), threonine 132, and threonine 158 contribute to the FAD site. Glutamate 241 functions as the Proton acceptor in the catalytic mechanism. 367-369 (VNE) contacts FAD.

The protein belongs to the acyl-CoA dehydrogenase family. As to quaternary structure, heterotetramer composed of FadE28 and FadE29. FAD is required as a cofactor.

The enzyme catalyses 3-oxochol-4-en-22-oyl-CoA + A = 3-oxochola-4,17-dien-22-oyl-CoA + AH2. It functions in the pathway steroid metabolism; cholesterol degradation. Involved in the third cycle of side chain dehydrogenation in the beta-oxidation of cholesterol catabolism. Contributes partly to the virulence by increasing the efficiency of beta-oxidation. Catalyzes the dehydrogenation of 2'-propanoyl-CoA ester side chains of 3-oxo-4-pregnene-20-carboxyl-CoA (3-OPC-CoA) to yield 3-oxo-4,17-pregnadiene-20-carboxyl-CoA (3-OPDC-CoA). Also able to dehydrogenate steroyl-CoA such as 3-oxo-chol-4-en-24-oyl-CoA (3-OCO-CoA), 1beta-(2'-propanoyl-CoA)-3a-alpha-H- 7a-beta-methylhexahydro-4-indanone (indanone-CoA ester), hexahydroindanone and pregenenone. The polypeptide is Acyl-CoA dehydrogenase FadE29 (fadE29) (Mycobacterium tuberculosis (strain ATCC 25618 / H37Rv)).